The following is a 320-amino-acid chain: Methionine import ATP-binding protein MetN (320 aa).

Residues 2–237 (IEIKNVSKYF…PSSEMKKLIG (236 aa)) form the ABC transporter domain. 34 to 41 (GHSGAGKS) serves as a coordination point for ATP.

The protein belongs to the ABC transporter superfamily. Methionine importer (TC 3.A.1.24) family. In terms of assembly, the complex is composed of two ATP-binding proteins (MetN), two transmembrane proteins (MetI) and a solute-binding protein (MetQ).

The protein localises to the cell membrane. It catalyses the reaction L-methionine(out) + ATP + H2O = L-methionine(in) + ADP + phosphate + H(+). The enzyme catalyses D-methionine(out) + ATP + H2O = D-methionine(in) + ADP + phosphate + H(+). Its function is as follows. Part of the ABC transporter complex MetNIQ involved in methionine import. Responsible for energy coupling to the transport system. In Clostridium acetobutylicum (strain ATCC 824 / DSM 792 / JCM 1419 / IAM 19013 / LMG 5710 / NBRC 13948 / NRRL B-527 / VKM B-1787 / 2291 / W), this protein is Methionine import ATP-binding protein MetN.